The sequence spans 249 residues: Phosphatidylserine decarboxylase proenzyme (249 aa).

The Schiff-base intermediate with substrate; via pyruvic acid role is filled by Ser-208. Ser-208 bears the Pyruvic acid (Ser); by autocatalysis mark.

This sequence belongs to the phosphatidylserine decarboxylase family. PSD-A subfamily. In terms of assembly, heterodimer of a large membrane-associated beta subunit and a small pyruvoyl-containing alpha subunit. The cofactor is pyruvate. Post-translationally, is synthesized initially as an inactive proenzyme. Formation of the active enzyme involves a self-maturation process in which the active site pyruvoyl group is generated from an internal serine residue via an autocatalytic post-translational modification. Two non-identical subunits are generated from the proenzyme in this reaction, and the pyruvate is formed at the N-terminus of the alpha chain, which is derived from the carboxyl end of the proenzyme. The post-translation cleavage follows an unusual pathway, termed non-hydrolytic serinolysis, in which the side chain hydroxyl group of the serine supplies its oxygen atom to form the C-terminus of the beta chain, while the remainder of the serine residue undergoes an oxidative deamination to produce ammonia and the pyruvoyl prosthetic group on the alpha chain.

The protein localises to the cell membrane. It carries out the reaction a 1,2-diacyl-sn-glycero-3-phospho-L-serine + H(+) = a 1,2-diacyl-sn-glycero-3-phosphoethanolamine + CO2. It participates in phospholipid metabolism; phosphatidylethanolamine biosynthesis; phosphatidylethanolamine from CDP-diacylglycerol: step 2/2. Functionally, catalyzes the formation of phosphatidylethanolamine (PtdEtn) from phosphatidylserine (PtdSer). This Erythrobacter litoralis (strain HTCC2594) protein is Phosphatidylserine decarboxylase proenzyme.